Reading from the N-terminus, the 715-residue chain is Polyribonucleotide nucleotidyltransferase (715 aa).

Residues Asp-485 and Asp-491 each contribute to the Mg(2+) site. The KH domain maps to 552-611; it reads PRIHTMKIDPKKIKDVIGKGGAVIRALTEETGTSIDIDDDGTVKIAATDNNAAKAVMARI. The region spanning 621 to 689 is the S1 motif domain; the sequence is NAIYKGKVTR…RQNRIRLTMK (69 aa). The interval 695-715 is disordered; it reads TPVAENVTEEAEVSSEQQAEI.

The protein belongs to the polyribonucleotide nucleotidyltransferase family. In terms of assembly, component of the RNA degradosome, which is a multiprotein complex involved in RNA processing and mRNA degradation. Mg(2+) is required as a cofactor.

The protein localises to the cytoplasm. It carries out the reaction RNA(n+1) + phosphate = RNA(n) + a ribonucleoside 5'-diphosphate. Functionally, involved in mRNA degradation. Catalyzes the phosphorolysis of single-stranded polyribonucleotides processively in the 3'- to 5'-direction. This Actinobacillus pleuropneumoniae serotype 3 (strain JL03) protein is Polyribonucleotide nucleotidyltransferase.